Reading from the N-terminus, the 550-residue chain is MNVNYIFVTGGVVSSLGKGIVTASLASVLEARGLDVTIIKLDPYINVDPGTMSPIQHGEVFITEDGAETDLDLGHYERFIKTKMTRYNNCTTGRIYSNVLKRERRGDYLGSTVQIIPHVTSFIKQWLITHSKSYDVLLVEVGGTVGDIESLPFLEAIRQMAIDVNRYHTLYIHLTLVPFISMTGELKTKPTQHSVKELLSIGIQPDILICRSDHLIGDSERKKISLFCNVSKKAVISLQNVNSIYKIPLMLQDQGLDEYICKYFNLNCPKADLSDWKQVVYYQNNPKGTVTIGIVGKYIRLTDAYKSVIEALQHAGLKNRFFVKICFIDAQDLETLSVKKMLKGLDGILVPGGFGYRGVEGKILSAQYARENNIPYFGICLGMQVALIEFARHVVGMEDANSTEFVNNCKYPVISEITGYQCTNNNNDIIQYHDNVDFSRSTMRLGSQVCHLIEGSLTQQMYGKKIIYERFRHRYEINISLFKEIEYAGLSGVGYSKNNNFIEIIECKNHPWFIGSQFHPEFNSTPRDGHPLFVGFINAAIQYQCKIIGS.

Residues 1-266 (MNVNYIFVTG…DEYICKYFNL (266 aa)) are amidoligase domain. Serine 14 contributes to the CTP binding site. Serine 14 is a binding site for UTP. ATP contacts are provided by residues 15–20 (SLGKGI) and aspartate 72. Mg(2+) contacts are provided by aspartate 72 and glutamate 140. Residues 147 to 149 (DIE), 187 to 192 (KTKPTQ), and lysine 223 contribute to the CTP site. Residues 187-192 (KTKPTQ) and lysine 223 contribute to the UTP site. One can recognise a Glutamine amidotransferase type-1 domain in the interval 291–546 (TIGIVGKYIR…INAAIQYQCK (256 aa)). Residue glycine 353 coordinates L-glutamine. Residue cysteine 380 is the Nucleophile; for glutamine hydrolysis of the active site. L-glutamine contacts are provided by residues 381–384 (LGMQ), glutamate 404, and arginine 474. Residues histidine 519 and glutamate 521 contribute to the active site.

The protein belongs to the CTP synthase family. Homotetramer.

The catalysed reaction is UTP + L-glutamine + ATP + H2O = CTP + L-glutamate + ADP + phosphate + 2 H(+). It catalyses the reaction L-glutamine + H2O = L-glutamate + NH4(+). It carries out the reaction UTP + NH4(+) + ATP = CTP + ADP + phosphate + 2 H(+). Its pathway is pyrimidine metabolism; CTP biosynthesis via de novo pathway; CTP from UDP: step 2/2. With respect to regulation, allosterically activated by GTP, when glutamine is the substrate; GTP has no effect on the reaction when ammonia is the substrate. The allosteric effector GTP functions by stabilizing the protein conformation that binds the tetrahedral intermediate(s) formed during glutamine hydrolysis. Inhibited by the product CTP, via allosteric rather than competitive inhibition. In terms of biological role, catalyzes the ATP-dependent amination of UTP to CTP with either L-glutamine or ammonia as the source of nitrogen. Regulates intracellular CTP levels through interactions with the four ribonucleotide triphosphates. The chain is CTP synthase from Blochmanniella floridana.